Reading from the N-terminus, the 346-residue chain is HLA class I histocompatibility antigen, alpha chain F (346 aa).

Residues 1–21 form the signal peptide; that stretch reads MAPRSLLLLLSGALALTDTWA. Residues 22-111 are alpha-1; that stretch reads GSHSLRYFST…LLRRYNQSEA (90 aa). Residues 22 to 305 are Extracellular-facing; the sequence is GSHSLRYFST…EQSPQPTIPI (284 aa). Residues Asn-91 and Arg-105 each coordinate a peptide antigen. The N-linked (GlcNAc...) asparagine glycan is linked to Asn-107. Positions 112-203 are alpha-2; it reads GSHTLQGMNG…ENGKETLQRA (92 aa). Intrachain disulfides connect Cys-122–Cys-185 and Cys-224–Cys-280. A peptide antigen-binding residues include Thr-164, Tyr-168, and Glu-176. The alpha-3 stretch occupies residues 204–295; sequence DPPKAHVAHH…GLPQPLILRW (92 aa). In terms of domain architecture, Ig-like C1-type spans 206 to 296; it reads PKAHVAHHPI…LPQPLILRWE (91 aa). The connecting peptide stretch occupies residues 296 to 305; the sequence is EQSPQPTIPI. A helical membrane pass occupies residues 306–329; it reads VGIVAGLVVLGAVVTGAVVAAVMW. Topologically, residues 330 to 346 are cytoplasmic; it reads RKKSSDRNRGSYSQAAV. The Sorting signal sequence; Golgi-retention signal; ER-retention signal signature appears at 336 to 338; the sequence is RNR.

Belongs to the MHC class I family. In terms of assembly, forms a heterotrimer with B2M and a self-peptide. Binds a diverse number of peptides ranging from 7 to more than 30 amino acids. Peptide-bound HLA-F-B2M interacts with LILRB1 and LILRB2 but not with KIR3DS1 or KIR3DL2; this interaction is direct. The OC form interacts with KIR3DS1, KIR2DS4 and KIR3DL2; this interaction is direct. Interacts with TAP1-TAP2 complex and CALR; this interaction is required for appropriate folding and peptide loading. Interacts with the coat protein complex II and 14-3-3 proteins; these interactions likely control the anterograde ER-to-Golgi transport of HLA-F. HLA-F-B2M complex interacts with the heavy chain of other MHC class I molecules including HLA-A and HLA-E; this interaction may regulate the intracellular trafficking and the stability of peptide-free MHC class I OCs. In terms of processing, N-glycosylated. As to expression, expressed in resting B cells (at protein level). Expressed in secondary lymphoid organs rich in B and T cells such as the tonsils, spleen, and thymus (at protein level). Expressed in the endothelial cells of the tonsils. Expressed on activated lymphoid cells including B cells, NK cells, CD4+ T cells and memory T cells (at protein level). Expressed in motor neurons of spinal cord.

Its subcellular location is the cell membrane. It localises to the early endosome membrane. The protein localises to the lysosome membrane. In terms of biological role, non-classical major histocompatibility class Ib molecule postulated to play a role in immune surveillance, immune tolerance and inflammation. Functions in two forms, as a heterotrimeric complex with B2M/beta-2 microglobulin and a peptide (peptide-bound HLA-F-B2M) and as an open conformer (OC) devoid of peptide and B2M (peptide-free OC). In complex with B2M, presents non-canonical self-peptides carrying post-translational modifications, particularly phosphorylated self-peptides. Peptide-bound HLA-F-B2M acts as a ligand for LILRB1 inhibitory receptor, a major player in maternal-fetal tolerance. Peptide-free OC acts as a ligand for KIR3DS1 and KIR3DL2 receptors. Upon interaction with activating KIR3DS1 receptor on NK cells, triggers NK cell degranulation and anti-viral cytokine production. Through interaction with KIR3DL2 receptor, inhibits NK and T cell effector functions. May interact with other MHC class I OCs to cross-present exogenous viral, tumor or minor histompatibility antigens to cytotoxic CD8+ T cells, triggering effector and memory responses. May play a role in inflammatory responses in the peripheral nervous system. Through interaction with KIR3DL2, may protect motor neurons from astrocyte-induced toxicity. The sequence is that of HLA class I histocompatibility antigen, alpha chain F from Homo sapiens (Human).